Here is a 119-residue protein sequence, read N- to C-terminus: Tubulin-specific chaperone A (119 aa).

It belongs to the TBCA family. As to quaternary structure, supercomplex made of cofactors A to E. Cofactors A and D function by capturing and stabilizing tubulin in a quasi-native conformation. Cofactor E binds to the cofactor D-tubulin complex; interaction with cofactor C then causes the release of tubulin polypeptides that are committed to the native state.

It is found in the cytoplasm. The protein resides in the cytoskeleton. In terms of biological role, required for the maintenance of microtubule structures and cell polarity. Beta-tubulin-folding protein; may have a regulatory role in the tubulin-folding pathway. This is Tubulin-specific chaperone A (alp31) from Schizosaccharomyces pombe (strain 972 / ATCC 24843) (Fission yeast).